The sequence spans 146 residues: VHLTAEEKSAVTALWGKVNVDEVGGEALGRLLVVYPWTQRFFDSFGDLSTPDAVMNNPKVKAHGKKVLGAFSDGLTHLDNLKGTFAQLSELHCDKLHVDPENFRLLGNVLVCVLAHHFGKEFTPQVQAAYQKVVAGVATALAHKYH.

Val1 carries the post-translational modification N-acetylvaline. The Globin domain maps to 2 to 146 (HLTAEEKSAV…VATALAHKYH (145 aa)). At Thr12 the chain carries Phosphothreonine. A Phosphoserine modification is found at Ser44. At Lys59 the chain carries N6-acetyllysine. His63 contacts heme b. N6-acetyllysine is present on Lys82. His92 serves as a coordination point for heme b. Cys93 carries the post-translational modification S-nitrosocysteine. An N6-acetyllysine modification is found at Lys144.

The protein belongs to the globin family. In terms of assembly, heterotetramer of two alpha chains and two beta chains. As to expression, red blood cells.

Functionally, involved in oxygen transport from the lung to the various peripheral tissues. The sequence is that of Hemoglobin subunit beta (HBB) from Cebus albifrons (White-fronted capuchin).